The sequence spans 78 residues: Exodeoxyribonuclease 7 small subunit (78 aa).

The protein belongs to the XseB family. As to quaternary structure, heterooligomer composed of large and small subunits.

The protein localises to the cytoplasm. It catalyses the reaction Exonucleolytic cleavage in either 5'- to 3'- or 3'- to 5'-direction to yield nucleoside 5'-phosphates.. Its function is as follows. Bidirectionally degrades single-stranded DNA into large acid-insoluble oligonucleotides, which are then degraded further into small acid-soluble oligonucleotides. The protein is Exodeoxyribonuclease 7 small subunit of Finegoldia magna (strain ATCC 29328 / DSM 20472 / WAL 2508) (Peptostreptococcus magnus).